The following is a 79-amino-acid chain: Sulfur carrier protein TusA (79 aa).

The Cysteine persulfide intermediate role is filled by C17.

This sequence belongs to the sulfur carrier protein TusA family.

The protein localises to the cytoplasm. In terms of biological role, sulfur carrier protein which probably makes part of a sulfur-relay system. The sequence is that of Sulfur carrier protein TusA from Pasteurella multocida (strain Pm70).